A 603-amino-acid chain; its full sequence is Grainyhead-like protein 3 homolog (603 aa).

Residues 30 to 95 are transcription activation; sequence EAWKTYLENP…QGKKFYHSMD (66 aa). In terms of domain architecture, Grh/CP2 DB spans 226 to 461; that stretch reads GLKSDFEYTL…DLETQPVLFI (236 aa).

This sequence belongs to the grh/CP2 family. Grainyhead subfamily. In terms of assembly, homodimer, also forms heterodimers with GRHL1 and GRHL2. Interacts with LMO4.

It is found in the nucleus. Transcription factor playing important roles in primary neurulation and in the differentiation of stratified epithelia of both ectodermal and endodermal origin. Binds directly to the consensus DNA sequence 5'-AACCGGTT-3' acting as an activator and repressor on distinct target genes. Essential for epidermal differentiation and barrier formation at the end of embryogenesis with TGM3 as critical direct target. Exhibits functional redundancy with GRHL2 in epidermal morphogenetic events such as eyelid fusion and epidermal wound repair. Despite being dispensable during normal epidermal homeostasis in the adulthood, is again required for barrier repair after immune-mediated epidermal damage, regulates distinct gene batteries in embryonic epidermal differentiation and adult epidermal barrier reformation after injury. Plays unique and cooperative roles with GRHL2 in establishing distinct zones of primary neurulation. Essential for spinal closure, functions cooperatively with GRHL2 in closure 2 (forebrain/midbrain boundary) and posterior neuropore closure. Also required for proper development of the oral periderm. No genetic interaction with GRHL1, no functional cooperativity due to diverse target gene selectivity. In Mus musculus (Mouse), this protein is Grainyhead-like protein 3 homolog.